Reading from the N-terminus, the 314-residue chain is Probable RuBisCO transcriptional regulator (314 aa).

One can recognise an HTH lysR-type domain in the interval 6-63 (FTLDQLKIIKTIHREGSFKTAAKKLYISQPAVSRQVQNLERQLNTPIFYRDKRKARLT). The segment at residues 23 to 42 (FKTAAKKLYISQPAVSRQVQ) is a DNA-binding region (H-T-H motif).

This sequence belongs to the LysR transcriptional regulatory family.

It localises to the plastid. Its subcellular location is the chloroplast. In terms of biological role, trans-acting transcriptional regulator of RuBisCO genes (rbcL and rbcS) expression. The protein is Probable RuBisCO transcriptional regulator (rbcR) of Emiliania huxleyi (Coccolithophore).